The primary structure comprises 426 residues: Serine hydroxymethyltransferase (426 aa).

(6S)-5,6,7,8-tetrahydrofolate is bound by residues Leu118 and 122–124; that span reads GHL. Residue Lys227 is modified to N6-(pyridoxal phosphate)lysine.

Belongs to the SHMT family. In terms of assembly, homodimer. Pyridoxal 5'-phosphate serves as cofactor.

It is found in the cytoplasm. The enzyme catalyses (6R)-5,10-methylene-5,6,7,8-tetrahydrofolate + glycine + H2O = (6S)-5,6,7,8-tetrahydrofolate + L-serine. It participates in one-carbon metabolism; tetrahydrofolate interconversion. The protein operates within amino-acid biosynthesis; glycine biosynthesis; glycine from L-serine: step 1/1. In terms of biological role, catalyzes the reversible interconversion of serine and glycine with tetrahydrofolate (THF) serving as the one-carbon carrier. This reaction serves as the major source of one-carbon groups required for the biosynthesis of purines, thymidylate, methionine, and other important biomolecules. Also exhibits THF-independent aldolase activity toward beta-hydroxyamino acids, producing glycine and aldehydes, via a retro-aldol mechanism. In Mycobacterium avium (strain 104), this protein is Serine hydroxymethyltransferase.